The chain runs to 273 residues: NAD-dependent protein deacylase (273 aa).

The Deacetylase sirtuin-type domain maps to arginine 20 to glycine 272. Glycine 48 to tryptophan 67 is a binding site for NAD(+). The substrate site is built by tyrosine 92 and arginine 95. Glutamine 129–aspartate 132 is an NAD(+) binding site. Residue histidine 147 is the Proton acceptor of the active site. Cysteine 155 and cysteine 174 together coordinate Zn(2+). NAD(+) contacts are provided by residues glycine 214–serine 216, asparagine 240–glutamate 242, and alanine 258.

The protein belongs to the sirtuin family. Class III subfamily. Zn(2+) serves as cofactor.

The protein resides in the cytoplasm. The catalysed reaction is N(6)-acetyl-L-lysyl-[protein] + NAD(+) + H2O = 2''-O-acetyl-ADP-D-ribose + nicotinamide + L-lysyl-[protein]. It carries out the reaction N(6)-succinyl-L-lysyl-[protein] + NAD(+) + H2O = 2''-O-succinyl-ADP-D-ribose + nicotinamide + L-lysyl-[protein]. The enzyme catalyses N(6)-(2-hydroxyisobutanoyl)-L-lysyl-[protein] + NAD(+) + H2O = 2''-O-(2-hydroxyisobutanoyl)-ADP-D-ribose + nicotinamide + L-lysyl-[protein]. In terms of biological role, NAD-dependent lysine deacetylase that specifically removes acetyl groups on target proteins. Also acts as a protein-lysine deacylase by mediating protein desuccinylation and de-2-hydroxyisobutyrylation. Modulates the activities of several proteins which are inactive in their acylated form. The protein is NAD-dependent protein deacylase of Shigella flexneri.